Here is a 70-residue protein sequence, read N- to C-terminus: UPF0270 protein VIBHAR_00073 (70 aa).

The protein belongs to the UPF0270 family.

This Vibrio campbellii (strain ATCC BAA-1116) protein is UPF0270 protein VIBHAR_00073.